Here is a 389-residue protein sequence, read N- to C-terminus: S-adenosylmethionine synthase (389 aa).

Residue H15 coordinates ATP. D17 is a binding site for Mg(2+). E43 is a K(+) binding site. Residues E56 and Q99 each contribute to the L-methionine site. The flexible loop stretch occupies residues 99–109; sequence QSPDIAQGVNE. Residues 166 to 168, 234 to 235, D243, 249 to 250, A266, and K270 contribute to the ATP site; these read DAK, RF, and RK. D243 contacts L-methionine. K274 contributes to the L-methionine binding site.

This sequence belongs to the AdoMet synthase family. In terms of assembly, homotetramer; dimer of dimers. Mg(2+) is required as a cofactor. Requires K(+) as cofactor.

It localises to the cytoplasm. It carries out the reaction L-methionine + ATP + H2O = S-adenosyl-L-methionine + phosphate + diphosphate. Its pathway is amino-acid biosynthesis; S-adenosyl-L-methionine biosynthesis; S-adenosyl-L-methionine from L-methionine: step 1/1. Catalyzes the formation of S-adenosylmethionine (AdoMet) from methionine and ATP. The overall synthetic reaction is composed of two sequential steps, AdoMet formation and the subsequent tripolyphosphate hydrolysis which occurs prior to release of AdoMet from the enzyme. The chain is S-adenosylmethionine synthase from Laribacter hongkongensis (strain HLHK9).